Reading from the N-terminus, the 63-residue chain is Chymotrypsin/elastase isoinhibitor 1 (63 aa).

5 cysteine pairs are disulfide-bonded: Cys-5/Cys-38, Cys-14/Cys-33, Cys-17/Cys-29, Cys-21/Cys-60, and Cys-40/Cys-54. A TIL domain is found at 5–60 (CGPNEVWTECTGCEMKCGPDENTPCPLMCRRPSCECSPGRGMRRTNDGKCIPASQC).

The protein belongs to the serine protease inhibitor-like (TIL domain-containing) family.

Its subcellular location is the secreted. In terms of biological role, defends the organism against the host's proteinases. The protein is Chymotrypsin/elastase isoinhibitor 1 of Ascaris suum (Pig roundworm).